Here is a 451-residue protein sequence, read N- to C-terminus: PTS system galactose-specific EIIC component (451 aa).

Positions L8–F427 constitute a PTS EIIC type-3 domain. Helical transmembrane passes span L40 to L60, F69 to A89, G104 to V124, T151 to I171, V190 to I210, A239 to I259, L263 to Y283, I296 to I316, L332 to M352, L356 to A376, and I403 to I423.

Its subcellular location is the cell membrane. In terms of biological role, the phosphoenolpyruvate-dependent sugar phosphotransferase system (PTS), a major carbohydrate active transport system, catalyzes the phosphorylation of incoming sugar substrates concomitant with their translocation across the cell membrane. Involved in galactose transport with PtcA and PtcB. The chain is PTS system galactose-specific EIIC component from Lactococcus lactis subsp. cremoris (strain MG1363).